A 101-amino-acid polypeptide reads, in one-letter code: Putative UPF0377 protein YBL108W (101 aa).

Belongs to the UPF0377 family.

This Saccharomyces cerevisiae (strain ATCC 204508 / S288c) (Baker's yeast) protein is Putative UPF0377 protein YBL108W.